The sequence spans 88 residues: N(2)-fixation sustaining protein CowN (88 aa).

It belongs to the CowN family.

Is required to sustain N(2)-dependent growth in the presence of low levels of carbon monoxide (CO). Probably acts by protecting the N(2) fixation ability of the nitrogenase complex, which is inactivated in the presence of CO. The protein is N(2)-fixation sustaining protein CowN of Rhodomicrobium vannielii (strain ATCC 17100 / DSM 162 / LMG 4299 / NCIMB 10020 / ATH 3.1.1).